Consider the following 204-residue polypeptide: Molybdenum cofactor guanylyltransferase (204 aa).

Residues 12–14 (LAG), K25, N53, D71, and D101 contribute to the GTP site. D101 contacts Mg(2+).

The protein belongs to the MobA family. In terms of assembly, monomer. The cofactor is Mg(2+).

The protein localises to the cytoplasm. The catalysed reaction is Mo-molybdopterin + GTP + H(+) = Mo-molybdopterin guanine dinucleotide + diphosphate. In terms of biological role, transfers a GMP moiety from GTP to Mo-molybdopterin (Mo-MPT) cofactor (Moco or molybdenum cofactor) to form Mo-molybdopterin guanine dinucleotide (Mo-MGD) cofactor. The chain is Molybdenum cofactor guanylyltransferase from Ralstonia pickettii (strain 12J).